The primary structure comprises 373 residues: L-threonine 3-dehydrogenase, mitochondrial (373 aa).

NAD(+) is bound by residues 62–67 (GGLGQL), 88–90 (DIR), 106–107 (DI), Y195, K199, and I225. Residue Y195 is the Proton donor/acceptor of the active site.

It belongs to the NAD(P)-dependent epimerase/dehydratase family. Homodimer.

The protein localises to the mitochondrion. The enzyme catalyses L-threonine + NAD(+) = (2S)-2-amino-3-oxobutanoate + NADH + H(+). It functions in the pathway amino-acid degradation; L-threonine degradation via oxydo-reductase pathway; glycine from L-threonine: step 1/2. In terms of biological role, catalyzes the NAD(+)-dependent oxidation of L-threonine to 2-amino-3-ketobutyrate, mediating L-threonine catabolism. The chain is L-threonine 3-dehydrogenase, mitochondrial from Sus scrofa (Pig).